The chain runs to 297 residues: Large ribosomal subunit protein uL18 (297 aa).

It belongs to the universal ribosomal protein uL18 family. Component of the large ribosomal subunit (LSU).

The protein localises to the cytoplasm. It is found in the nucleus. Component of the ribosome, a large ribonucleoprotein complex responsible for the synthesis of proteins in the cell. The small ribosomal subunit (SSU) binds messenger RNAs (mRNAs) and translates the encoded message by selecting cognate aminoacyl-transfer RNA (tRNA) molecules. The large subunit (LSU) contains the ribosomal catalytic site termed the peptidyl transferase center (PTC), which catalyzes the formation of peptide bonds, thereby polymerizing the amino acids delivered by tRNAs into a polypeptide chain. The nascent polypeptides leave the ribosome through a tunnel in the LSU and interact with protein factors that function in enzymatic processing, targeting, and the membrane insertion of nascent chains at the exit of the ribosomal tunnel. The chain is Large ribosomal subunit protein uL18 (RpL5) from Aedes aegypti (Yellowfever mosquito).